A 335-amino-acid polypeptide reads, in one-letter code: Methionine import ATP-binding protein MetN (335 aa).

In terms of domain architecture, ABC transporter spans 2–241; that stretch reads IEFQRLHKSY…PKHVTTRRFV (240 aa). Position 38 to 45 (38 to 45) interacts with ATP; that stretch reads GHSGAGKS.

The protein belongs to the ABC transporter superfamily. Methionine importer (TC 3.A.1.24) family. The complex is composed of two ATP-binding proteins (MetN), two transmembrane proteins (MetI) and a solute-binding protein (MetQ).

It is found in the cell inner membrane. The enzyme catalyses L-methionine(out) + ATP + H2O = L-methionine(in) + ADP + phosphate + H(+). It carries out the reaction D-methionine(out) + ATP + H2O = D-methionine(in) + ADP + phosphate + H(+). Its function is as follows. Part of the ABC transporter complex MetNIQ involved in methionine import. Responsible for energy coupling to the transport system. The sequence is that of Methionine import ATP-binding protein MetN from Xanthomonas oryzae pv. oryzae (strain KACC10331 / KXO85).